The following is a 396-amino-acid chain: Ribosomal RNA large subunit methyltransferase I (396 aa).

The PUA domain occupies 2 to 79 (AVRIKLKPGR…REEEIDREFF (78 aa)).

Belongs to the methyltransferase superfamily. RlmI family.

It localises to the cytoplasm. It catalyses the reaction cytidine(1962) in 23S rRNA + S-adenosyl-L-methionine = 5-methylcytidine(1962) in 23S rRNA + S-adenosyl-L-homocysteine + H(+). In terms of biological role, specifically methylates the cytosine at position 1962 (m5C1962) of 23S rRNA. The sequence is that of Ribosomal RNA large subunit methyltransferase I from Shewanella sp. (strain ANA-3).